Here is a 629-residue protein sequence, read N- to C-terminus: tRNA uridine 5-carboxymethylaminomethyl modification enzyme MnmG (629 aa).

FAD is bound at residue 11–16; the sequence is GGGHAG. 273 to 287 serves as a coordination point for NAD(+); the sequence is GPRYCPSFEDKVVRF.

It belongs to the MnmG family. In terms of assembly, homodimer. Heterotetramer of two MnmE and two MnmG subunits. It depends on FAD as a cofactor.

Its subcellular location is the cytoplasm. Functionally, NAD-binding protein involved in the addition of a carboxymethylaminomethyl (cmnm) group at the wobble position (U34) of certain tRNAs, forming tRNA-cmnm(5)s(2)U34. This Mycoplasma capricolum subsp. capricolum (strain California kid / ATCC 27343 / NCTC 10154) protein is tRNA uridine 5-carboxymethylaminomethyl modification enzyme MnmG.